The following is a 338-amino-acid chain: Glyceraldehyde-3-phosphate dehydrogenase, cytosolic (338 aa).

Residues 13 to 14, Asp-35, and Arg-82 each bind NAD(+); that span reads RI. Residues 153 to 155, Thr-184, 213 to 214, and Arg-236 each bind D-glyceraldehyde 3-phosphate; these read SCT and TG. Cys-154 functions as the Nucleophile in the catalytic mechanism. Asn-318 is a binding site for NAD(+).

This sequence belongs to the glyceraldehyde-3-phosphate dehydrogenase family. Homotetramer.

The protein resides in the cytoplasm. The enzyme catalyses D-glyceraldehyde 3-phosphate + phosphate + NAD(+) = (2R)-3-phospho-glyceroyl phosphate + NADH + H(+). It participates in carbohydrate degradation; glycolysis; pyruvate from D-glyceraldehyde 3-phosphate: step 1/5. Its function is as follows. Key enzyme in glycolysis that catalyzes the first step of the pathway by converting D-glyceraldehyde 3-phosphate (G3P) into 3-phospho-D-glyceroyl phosphate. Essential for the maintenance of cellular ATP levels and carbohydrate metabolism. The polypeptide is Glyceraldehyde-3-phosphate dehydrogenase, cytosolic (GAPC) (Dianthus caryophyllus (Carnation)).